A 108-amino-acid polypeptide reads, in one-letter code: T-cell acute lymphocytic leukemia protein 2 homolog (108 aa).

The bHLH domain occupies 2–54 (TRKIFTNTRERWRQQSVNNAFAKLRKLIPTHPPDKKLSKNETLRLAMRYINFL). The disordered stretch occupies residues 76 to 108 (GLFPPKTRLPDEDDRTLLNDYRVPSPGPSHGAP).

The protein is T-cell acute lymphocytic leukemia protein 2 homolog (Tal2) of Mus musculus (Mouse).